Consider the following 230-residue polypeptide: Biosynthetic peptidoglycan transglycosylase (230 aa).

A helical membrane pass occupies residues 10 to 30 (IFLFFIAVIFVYQFWIFSQIV).

This sequence belongs to the glycosyltransferase 51 family.

It is found in the cell inner membrane. The enzyme catalyses [GlcNAc-(1-&gt;4)-Mur2Ac(oyl-L-Ala-gamma-D-Glu-L-Lys-D-Ala-D-Ala)](n)-di-trans,octa-cis-undecaprenyl diphosphate + beta-D-GlcNAc-(1-&gt;4)-Mur2Ac(oyl-L-Ala-gamma-D-Glu-L-Lys-D-Ala-D-Ala)-di-trans,octa-cis-undecaprenyl diphosphate = [GlcNAc-(1-&gt;4)-Mur2Ac(oyl-L-Ala-gamma-D-Glu-L-Lys-D-Ala-D-Ala)](n+1)-di-trans,octa-cis-undecaprenyl diphosphate + di-trans,octa-cis-undecaprenyl diphosphate + H(+). It functions in the pathway cell wall biogenesis; peptidoglycan biosynthesis. Its function is as follows. Peptidoglycan polymerase that catalyzes glycan chain elongation from lipid-linked precursors. In Nitrosospira multiformis (strain ATCC 25196 / NCIMB 11849 / C 71), this protein is Biosynthetic peptidoglycan transglycosylase.